A 345-amino-acid polypeptide reads, in one-letter code: Anthranilate phosphoribosyltransferase (345 aa).

5-phospho-alpha-D-ribose 1-diphosphate-binding positions include glycine 79, 82 to 83 (GD), threonine 87, 89 to 92 (NVST), 106 to 114 (KHGNRAVSG), and serine 118. Anthranilate is bound at residue glycine 79. Serine 91 contributes to the Mg(2+) binding site. Asparagine 109 contacts anthranilate. Arginine 164 contacts anthranilate. 2 residues coordinate Mg(2+): aspartate 223 and glutamate 224.

It belongs to the anthranilate phosphoribosyltransferase family. As to quaternary structure, homodimer. It depends on Mg(2+) as a cofactor.

It catalyses the reaction N-(5-phospho-beta-D-ribosyl)anthranilate + diphosphate = 5-phospho-alpha-D-ribose 1-diphosphate + anthranilate. The protein operates within amino-acid biosynthesis; L-tryptophan biosynthesis; L-tryptophan from chorismate: step 2/5. Its function is as follows. Catalyzes the transfer of the phosphoribosyl group of 5-phosphorylribose-1-pyrophosphate (PRPP) to anthranilate to yield N-(5'-phosphoribosyl)-anthranilate (PRA). This chain is Anthranilate phosphoribosyltransferase, found in Sulfurisphaera tokodaii (strain DSM 16993 / JCM 10545 / NBRC 100140 / 7) (Sulfolobus tokodaii).